Consider the following 132-residue polypeptide: Small ribosomal subunit protein uS8 (132 aa).

This sequence belongs to the universal ribosomal protein uS8 family. Part of the 30S ribosomal subunit. Contacts proteins S5 and S12.

In terms of biological role, one of the primary rRNA binding proteins, it binds directly to 16S rRNA central domain where it helps coordinate assembly of the platform of the 30S subunit. The polypeptide is Small ribosomal subunit protein uS8 (Parvibaculum lavamentivorans (strain DS-1 / DSM 13023 / NCIMB 13966)).